A 439-amino-acid polypeptide reads, in one-letter code: GTPase Der (439 aa).

2 EngA-type G domains span residues 4 to 168 and 177 to 352; these read PIVA…KDDE and INIA…DNYT. Residues 10–17, 57–61, 120–123, 183–190, 230–234, and 295–298 each bind GTP; these read GRPNVGKS, DTGGI, NKID, GKPNVGKS, DTAGL, and NKWD. The 85-residue stretch at 353–437 folds into the KH-like domain; sequence KRVKTGVLND…GIKTEFRERK (85 aa).

It belongs to the TRAFAC class TrmE-Era-EngA-EngB-Septin-like GTPase superfamily. EngA (Der) GTPase family. As to quaternary structure, associates with the 50S ribosomal subunit.

GTPase that plays an essential role in the late steps of ribosome biogenesis. This is GTPase Der from Clostridium botulinum (strain Loch Maree / Type A3).